Reading from the N-terminus, the 187-residue chain is Lysozyme C-like protein DDB_G0288143 (187 aa).

The first 23 residues, 1–23 (MKVSNLISTITIASALCLSLTNA), serve as a signal peptide directing secretion. Disulfide bonds link Cys50–Cys125, Cys74–Cys82, and Cys78–Cys97. Glu55 is a catalytic residue. Residues 133–187 (QHGSHSSTSRDSSSSSSRDSTGTGYSSSGSGTSGSGSNSGQTGHFIPGQSGHGLN) are disordered. A compositionally biased stretch (low complexity) spans 136-175 (SHSSTSRDSSSSSSRDSTGTGYSSSGSGTSGSGSNSGQTG).

This sequence belongs to the glycosyl hydrolase 22 family.

In Dictyostelium discoideum (Social amoeba), this protein is Lysozyme C-like protein DDB_G0288143.